A 770-amino-acid polypeptide reads, in one-letter code: Nucleus-vacuole junction protein 2 (770 aa).

Residues 1 to 5 (MASLK) lie on the Cytoplasmic side of the membrane. Residues 6–26 (VFLAVYLLGGITFLPLVLFTL) form a helical; Signal-anchor for type II membrane protein membrane-spanning segment. The Lumenal segment spans residues 27–770 (YKIHLLYSNL…EFEEQREPKL (744 aa)). The 153-residue stretch at 114-266 (TALQEQILQR…WYYQLINASK (153 aa)) folds into the PH domain. Residues N228, N263, N279, N300, N391, N528, and N529 are each glycosylated (N-linked (GlcNAc...) asparagine). The SMP-LTD domain maps to 304–504 (NQLTTKWLNA…YPTPNEVYRG (201 aa)). 3 disordered regions span residues 541-566 (EGGM…LKDL), 578-600 (TQTT…TKSR), and 615-770 (KDNV…EPKL). Over residues 554–566 (LRPERKKENLKDL) the composition is skewed to basic and acidic residues. The segment covering 587–596 (NDDVSSSENS) has biased composition (polar residues). 2 N-linked (GlcNAc...) asparagine glycosylation sites follow: N595 and N620. Phosphoserine occurs at positions 640 and 669. Residues 679–688 (LEGRKEKDTE) are compositionally biased toward basic and acidic residues. N700 is a glycosylation site (N-linked (GlcNAc...) asparagine). 2 stretches are compositionally biased toward polar residues: residues 713–725 (FSVS…NSLK) and 736–751 (LESS…QNRF). S717 bears the Phosphoserine mark. A glycan (N-linked (GlcNAc...) asparagine) is linked at N718. S720 and S723 each carry phosphoserine. Positions 756–770 (FKQDLEFEEQREPKL) are enriched in basic and acidic residues.

Its subcellular location is the endoplasmic reticulum membrane. It is found in the nucleus membrane. Functionally, during endoplasmic reticulum (ER) stress or when cellular ceramide levels increase, induces contacts between the ER and medial-Golgi complex to facilitate non-vesicular transport of ceramides from the ER to the Golgi complex where they are converted to complex sphingolipids, preventing toxic ceramide accumulation. The sequence is that of Nucleus-vacuole junction protein 2 from Saccharomyces cerevisiae (strain ATCC 204508 / S288c) (Baker's yeast).